Reading from the N-terminus, the 192-residue chain is ADP-ribosylation factor-like protein 14 (192 aa).

Glycine 2 carries the N-myristoyl glycine lipid modification. GTP-binding positions include 20-27 (GLDSAGKS), 64-68 (DVGGQ), and 123-126 (NKQD).

Belongs to the small GTPase superfamily. Arf family. In terms of assembly, interacts with ARL14EP. Expressed in immature dendritic cells.

It is found in the cytoplasmic vesicle. GTPase that recruits MYO1E to MHC class II-containing vesicles via the effector protein ARL14EP and hence controls the movement of these vesicles along the actin cytoskeleton in dendritic cells. This chain is ADP-ribosylation factor-like protein 14 (ARL14), found in Homo sapiens (Human).